A 146-amino-acid polypeptide reads, in one-letter code: UPF0260 protein Swit_2819 (146 aa).

This sequence belongs to the UPF0260 family.

This chain is UPF0260 protein Swit_2819, found in Rhizorhabdus wittichii (strain DSM 6014 / CCUG 31198 / JCM 15750 / NBRC 105917 / EY 4224 / RW1) (Sphingomonas wittichii).